A 414-amino-acid polypeptide reads, in one-letter code: MFRMLAKASVTLGSRAASWVRNMGSHQLLVPPPEALSKPLSIPKRLLLGPGPSNLAPRVLAAGSLRMIGHMQKEMFQIMDEIKQGIQYVFQTRNPLTLVVSGSGHCAMETALFNLLEPGDSFLVGTNGIWGIRAAEIAERIGARVHQMIKKPGEHYTLQEVEEGLAQHKPVLLFLTHGESSTGVLQPLDGFGELCHRYQCLLLVDSVASLGGVPIYMDQQGIDILYSGSQKVLNAPPGISLISFNDKAKSKVYSRKTKPVSFYTDITYLSKLWGCEGKTRVIHHTLPVISLYCLRESLALISEQGLENSWRRHREATAHLHKCLRELGLKFFVKDPEIRLPTITTVTVPAGYNWRDIVSYVLDHFNIEISGGLGPSEDKVLRIGLLGYNATTENADRVAEALREALQHCPKNKL.

Residues 1–23 (MFRMLAKASVTLGSRAASWVRNM) constitute a mitochondrion transit peptide. N6-(pyridoxal phosphate)lysine is present on Lys231. An N6-acetyllysine; alternate modification is found at Lys247. Residue Lys247 is modified to N6-succinyllysine; alternate. N6-acetyllysine occurs at positions 256 and 334. Arg382 is a binding site for substrate. Residues 412–414 (NKL) carry the Microbody targeting signal motif.

The protein belongs to the class-V pyridoxal-phosphate-dependent aminotransferase family. Homodimer. The cofactor is pyridoxal 5'-phosphate.

It localises to the peroxisome. The protein localises to the mitochondrion matrix. It catalyses the reaction L-serine + pyruvate = 3-hydroxypyruvate + L-alanine. The enzyme catalyses glyoxylate + L-alanine = glycine + pyruvate. Its function is as follows. Catalyzes the transamination of glyoxylate to glycine and contributes to the glyoxylate detoxification. Catalyzes the transamination between L-serine and pyruvate and weakly contributes to gluconeogenesis from the L-serine metabolism. This Rattus norvegicus (Rat) protein is Alanine--glyoxylate aminotransferase.